We begin with the raw amino-acid sequence, 177 residues long: NADH-quinone oxidoreductase subunit B (177 aa).

4 residues coordinate [4Fe-4S] cluster: C56, C57, C121, and C151.

This sequence belongs to the complex I 20 kDa subunit family. In terms of assembly, NDH-1 is composed of 14 different subunits. Subunits NuoB, C, D, E, F, and G constitute the peripheral sector of the complex. The cofactor is [4Fe-4S] cluster.

Its subcellular location is the cell inner membrane. The catalysed reaction is a quinone + NADH + 5 H(+)(in) = a quinol + NAD(+) + 4 H(+)(out). NDH-1 shuttles electrons from NADH, via FMN and iron-sulfur (Fe-S) centers, to quinones in the respiratory chain. Couples the redox reaction to proton translocation (for every two electrons transferred, four hydrogen ions are translocated across the cytoplasmic membrane), and thus conserves the redox energy in a proton gradient. This Sphingopyxis alaskensis (strain DSM 13593 / LMG 18877 / RB2256) (Sphingomonas alaskensis) protein is NADH-quinone oxidoreductase subunit B.